The sequence spans 198 residues: Ribosome maturation factor RimM (198 aa).

Residues 1-21 (MPPPTASTPDDSADPGPDFAD) are disordered. One can recognise a PRC barrel domain in the interval 122–195 (DDELFADDLV…RIVVRPIDGL (74 aa)).

Belongs to the RimM family. In terms of assembly, binds ribosomal protein uS19.

It is found in the cytoplasm. In terms of biological role, an accessory protein needed during the final step in the assembly of 30S ribosomal subunit, possibly for assembly of the head region. Essential for efficient processing of 16S rRNA. May be needed both before and after RbfA during the maturation of 16S rRNA. It has affinity for free ribosomal 30S subunits but not for 70S ribosomes. The sequence is that of Ribosome maturation factor RimM from Salinibacter ruber (strain DSM 13855 / M31).